Here is a 138-residue protein sequence, read N- to C-terminus: Protein FAM136A (138 aa).

A2 bears the N-acetylalanine mark. Phosphothreonine occurs at positions 124 and 126.

Belongs to the FAM136 family.

The chain is Protein FAM136A (FAM136A) from Bos taurus (Bovine).